The sequence spans 490 residues: Cytochrome P450 2C14 (490 aa).

Position 435 (Cys-435) interacts with heme.

Belongs to the cytochrome P450 family. The cofactor is heme.

Its subcellular location is the endoplasmic reticulum membrane. The protein resides in the microsome membrane. It carries out the reaction an organic molecule + reduced [NADPH--hemoprotein reductase] + O2 = an alcohol + oxidized [NADPH--hemoprotein reductase] + H2O + H(+). Its function is as follows. Cytochromes P450 are a group of heme-thiolate monooxygenases. In liver microsomes, this enzyme is involved in an NADPH-dependent electron transport pathway. It oxidizes a variety of structurally unrelated compounds, including steroids, fatty acids, and xenobiotics. The protein is Cytochrome P450 2C14 (CYP2C14) of Oryctolagus cuniculus (Rabbit).